A 109-amino-acid chain; its full sequence is Probable guanidinium efflux system subunit GdnC (109 aa).

A run of 4 helical transmembrane segments spans residues 3–23 (WGSV…LKHA), 26–46 (ALEW…LVKA), 55–75 (VYAV…IALF), and 81–101 (IAKL…KLVT).

The protein belongs to the drug/metabolite transporter (DMT) superfamily. Small multidrug resistance (SMR) (TC 2.A.7.1) family. YkkC/YkkD subfamily. The efflux pump is composed of GdnC and GdnD.

Its subcellular location is the cell membrane. Its function is as follows. Probably involved in guanidinium transport. The polypeptide is Probable guanidinium efflux system subunit GdnC (Bacillus licheniformis (strain ATCC 14580 / DSM 13 / JCM 2505 / CCUG 7422 / NBRC 12200 / NCIMB 9375 / NCTC 10341 / NRRL NRS-1264 / Gibson 46)).